The following is a 92-amino-acid chain: Large ribosomal subunit protein bL27 (92 aa).

Positions 1–8 (MLMNLQFF) are excised as a propeptide. The disordered stretch occupies residues 11–30 (HKGGGSTANGRDSAGRRLGA).

Belongs to the bacterial ribosomal protein bL27 family. The N-terminus is cleaved by ribosomal processing cysteine protease Prp.

The polypeptide is Large ribosomal subunit protein bL27 (Lactiplantibacillus plantarum (strain ATCC BAA-793 / NCIMB 8826 / WCFS1) (Lactobacillus plantarum)).